The primary structure comprises 101 residues: MTKESIKAREIKRLKLVNKYYTQRISLKKIIIDQRIPNEERWNAVLKLQTLPRDSSPSRRRNRCRHTGRPHAFLRKFGLSRMKVREAAMRGEIPGLRKASW.

The protein belongs to the universal ribosomal protein uS14 family. As to quaternary structure, part of the 30S ribosomal subunit. Contacts proteins S3 and S10.

Its function is as follows. Binds 16S rRNA, required for the assembly of 30S particles and may also be responsible for determining the conformation of the 16S rRNA at the A site. The chain is Small ribosomal subunit protein uS14 from Blochmanniella pennsylvanica (strain BPEN).